Reading from the N-terminus, the 352-residue chain is Transcription factor MYB51 (352 aa).

2 consecutive HTH myb-type domains span residues 10–62 (ELGL…ANYL) and 63–117 (RPDI…KKRL). 2 DNA-binding regions (H-T-H motif) span residues 38–62 (WRTL…ANYL) and 90–113 (WSAI…NTHI). Disordered stretches follow at residues 128–157 (KGIT…DLDN) and 198–219 (GGPL…SVDS). Low complexity predominate over residues 203–219 (STSHTTNTTTTSVSVDS).

As to quaternary structure, can form complexes with MYC2, MYC3 or MYC4. Expressed in vegetative parts of the plant, mainly in mature rosette leaves and in trichomes. Detected in roots, but not in mature flowers or siliques.

It is found in the nucleus. Transcription factor positively regulating indolic glucosinolate biosynthetic pathway genes. The chain is Transcription factor MYB51 (MYB51) from Arabidopsis thaliana (Mouse-ear cress).